We begin with the raw amino-acid sequence, 387 residues long: F-box protein DOR (387 aa).

The F-box domain maps to 19 to 64; it reads DENFEPIPIDLVIEIFSRSPVKSIARCRCVSKLWASILRLPYFTEL.

As to quaternary structure, part of a SCF (ASK-cullin-F-box) protein ligase complex. Interacts with ASK14 and CUL1. As to expression, strongly expressed in guard cells. Mostly represented in seedlings, leaves and flowers, and, to a lower extent, in roots and siliques.

Its pathway is protein modification; protein ubiquitination. In terms of biological role, component of SCF(ASK-cullin-F-box) E3 ubiquitin ligase complexes, which may mediate the ubiquitination and subsequent proteasomal degradation of target proteins. Negative regulator of guard cell abscisic acid (ABA) signaling, especially during drought stress. The polypeptide is F-box protein DOR (DOR) (Arabidopsis thaliana (Mouse-ear cress)).